We begin with the raw amino-acid sequence, 526 residues long: Probable rhamnogalacturonase B (526 aa).

The N-terminal stretch at 1 to 20 (MHVNTLSVLSLVGLVPLAAA) is a signal peptide. Cysteines 41 and 67 form a disulfide. A glycan (N-linked (GlcNAc...) asparagine) is linked at Asn144. Catalysis depends on Asp218, which acts as the Proton donor. Cys220 and Cys237 are joined by a disulfide. N-linked (GlcNAc...) asparagine glycans are attached at residues Asn238 and Asn253. His293 is a catalytic residue. An N-linked (GlcNAc...) asparagine glycan is attached at Asn320. 2 disulfides stabilise this stretch: Cys343-Cys349 and Cys371-Cys380.

It belongs to the glycosyl hydrolase 28 family.

It is found in the secreted. The catalysed reaction is Endohydrolysis of alpha-D-GalA-(1-&gt;2)-alpha-L-Rha glycosidic bond in the rhamnogalacturonan I backbone with initial inversion of anomeric configuration releasing oligosaccharides with beta-D-GalA at the reducing end.. In terms of biological role, pectinolytic enzymes consist of four classes of enzymes: pectine lyase, polygalacturonase, pectin methylesterase and rhamnogalacturonase. Hydrolyzes alpha-D-galacturonopyranosyl-(1,2)-alpha-L-rhamnopyranosyl linkages in the backbone of the hairy regions of pectins. The protein is Probable rhamnogalacturonase B (rhgB) of Aspergillus terreus (strain NIH 2624 / FGSC A1156).